The sequence spans 446 residues: Methanogenesis regulatory protein FilR1 (446 aa).

One can recognise a Response regulatory domain in the interval 297–416 (DVMIVEDDLG…QRLPEIAEEA (120 aa)). The residue at position 350 (aspartate 350) is a 4-aspartylphosphate.

Phosphorylated by FilI.

Functionally, member of the two-component regulatory system FilI/FilRs, which is involved in the regulation of methanogenesis. Regulates its own expression, expression of the filI-filR2 operon, and of genes involved in methanogenesis such as acs1, acs4 and mtrABC. Acts by binding to the promoters. This Methanothrix harundinacea (strain 6Ac) (Methanosaeta harundinacea) protein is Methanogenesis regulatory protein FilR1.